Consider the following 485-residue polypeptide: Adenosylhomocysteinase (485 aa).

Positions 60, 146, and 208 each coordinate substrate. 209-211 (TTT) contributes to the NAD(+) binding site. Substrate-binding residues include Lys238 and Asp242. Residues Asn243, 272-277 (GYGDVG), Glu295, Asn330, 351-353 (IGH), and Asn399 each bind NAD(+).

Belongs to the adenosylhomocysteinase family. NAD(+) serves as cofactor.

The protein resides in the cytoplasm. It catalyses the reaction S-adenosyl-L-homocysteine + H2O = L-homocysteine + adenosine. It functions in the pathway amino-acid biosynthesis; L-homocysteine biosynthesis; L-homocysteine from S-adenosyl-L-homocysteine: step 1/1. Its function is as follows. May play a key role in the regulation of the intracellular concentration of adenosylhomocysteine. In Streptomyces griseus subsp. griseus (strain JCM 4626 / CBS 651.72 / NBRC 13350 / KCC S-0626 / ISP 5235), this protein is Adenosylhomocysteinase.